The following is a 225-amino-acid chain: Ribonuclease 3 (225 aa).

The 123-residue stretch at 5 to 127 (IDKLERKIGY…IIGAVYLDSD (123 aa)) folds into the RNase III domain. Residue glutamate 40 coordinates Mg(2+). Residue aspartate 44 is part of the active site. Positions 113 and 116 each coordinate Mg(2+). Residue glutamate 116 is part of the active site. The region spanning 154-224 (DPKTRLQEFL…AETALEQLSN (71 aa)) is the DRBM domain.

It belongs to the ribonuclease III family. In terms of assembly, homodimer. The cofactor is Mg(2+).

Its subcellular location is the cytoplasm. The catalysed reaction is Endonucleolytic cleavage to 5'-phosphomonoester.. Functionally, digests double-stranded RNA. Involved in the processing of primary rRNA transcript to yield the immediate precursors to the large and small rRNAs (23S and 16S). Processes some mRNAs, and tRNAs when they are encoded in the rRNA operon. Processes pre-crRNA and tracrRNA of type II CRISPR loci if present in the organism. This chain is Ribonuclease 3, found in Vibrio atlanticus (strain LGP32) (Vibrio splendidus (strain Mel32)).